The sequence spans 478 residues: Ribosomal RNA small subunit methyltransferase F (478 aa).

Residues 123–129 (AAAPGSK), Glu147, Asp174, and Asp192 contribute to the S-adenosyl-L-methionine site. The active-site Nucleophile is the Cys245.

It belongs to the class I-like SAM-binding methyltransferase superfamily. RsmB/NOP family.

Its subcellular location is the cytoplasm. It carries out the reaction cytidine(1407) in 16S rRNA + S-adenosyl-L-methionine = 5-methylcytidine(1407) in 16S rRNA + S-adenosyl-L-homocysteine + H(+). In terms of biological role, specifically methylates the cytosine at position 1407 (m5C1407) of 16S rRNA. In Vibrio parahaemolyticus serotype O3:K6 (strain RIMD 2210633), this protein is Ribosomal RNA small subunit methyltransferase F.